A 447-amino-acid polypeptide reads, in one-letter code: Tubulin beta chain (447 aa).

Residues Q11, E69, S138, G142, T143, G144, N204, and N226 each coordinate GTP. E69 provides a ligand contact to Mg(2+). The disordered stretch occupies residues 424 to 447 (QYQEASVSEGEEEYDEEAPLEGEE). Residues 432–447 (EGEEEYDEEAPLEGEE) show a composition bias toward acidic residues.

Belongs to the tubulin family. In terms of assembly, dimer of alpha and beta chains. A typical microtubule is a hollow water-filled tube with an outer diameter of 25 nm and an inner diameter of 15 nM. Alpha-beta heterodimers associate head-to-tail to form protofilaments running lengthwise along the microtubule wall with the beta-tubulin subunit facing the microtubule plus end conferring a structural polarity. Microtubules usually have 13 protofilaments but different protofilament numbers can be found in some organisms and specialized cells. Mg(2+) is required as a cofactor.

The protein resides in the cytoplasm. Its subcellular location is the cytoskeleton. Tubulin is the major constituent of microtubules, a cylinder consisting of laterally associated linear protofilaments composed of alpha- and beta-tubulin heterodimers. Microtubules grow by the addition of GTP-tubulin dimers to the microtubule end, where a stabilizing cap forms. Below the cap, tubulin dimers are in GDP-bound state, owing to GTPase activity of alpha-tubulin. In Dothistroma septosporum (Red band needle blight fungus), this protein is Tubulin beta chain (TUB1).